Consider the following 672-residue polypeptide: Transmembrane 9 superfamily member 2 (672 aa).

The signal sequence occupies residues 1–18; that stretch reads MKRGVWLLIYCYATLTKG. Over 19 to 307 the chain is Extracellular; it reads FSLPGLSPTT…DKYLHIYDPQ (289 aa). The chain crosses the membrane as a helical span at residues 308-328; it reads IQWFSLINFSVIVILLSSVVM. Over 329-383 the chain is Cytoplasmic; the sequence is HSLLRALKSDLARYNELNLDNEFHEDSGWKLGHGDVFRTPSKSMLLSILVGSGMQ. Residues 384 to 404 traverse the membrane as a helical segment; sequence LFLMVMCSIFFAAVGLVSPVS. Over 405-410 the chain is Extracellular; that stretch reads RGSLPT. A helical membrane pass occupies residues 411 to 431; the sequence is VMFVLYALFGFVGSYASMGVY. The Cytoplasmic segment spans residues 432–447; the sequence is KFFRGPYWKANMILTP. The helical transmembrane segment at 448 to 468 threads the bilayer; the sequence is ILLPGAIFLLIVIMNFFLLFA. Over 469 to 479 the chain is Extracellular; sequence HSSGVIPARSL. Residues 480–500 traverse the membrane as a helical segment; it reads FFIILLWFLVSVPLSFAGSIV. Residues 501-532 are Cytoplasmic-facing; sequence AHKQCNWDEHPTKTNQIARQIPYQPWYLRTAQ. The chain crosses the membrane as a helical span at residues 533–553; sequence ATLIAGIFSFGSIAVELYFIY. The Extracellular segment spans residues 554–565; that stretch reads SSLWFNKIFYMF. A helical membrane pass occupies residues 566–586; sequence GFLLFSFLLLTLTTSLVTILI. Residues 587–601 lie on the Cytoplasmic side of the membrane; sequence TYYSLCLENWLWQWR. A helical transmembrane segment spans residues 602-622; the sequence is SFIIGGLGCSIYTFIHSILFT. The Extracellular portion of the chain corresponds to 623 to 628; sequence KFKLGG. A helical membrane pass occupies residues 629-649; sequence VITVVLYLGYSLIISALCCVV. Topologically, residues 650–672 are cytoplasmic; that stretch reads TGAIGFFSSMFFIRKIYSAIKVE.

This sequence belongs to the nonaspanin (TM9SF) (TC 9.A.2) family.

The protein resides in the vacuole membrane. In terms of biological role, with EMP70 and TMN3, plays a critical role in the late stages of a nutrient-controlled pathway notably regulating FLO11 gene expression. Acts downstream of RAS2 and TOR. Essential for cell adhesion and filamentous growth. May play a role as effector of cellular copper homeostasis. The polypeptide is Transmembrane 9 superfamily member 2 (TMN2) (Saccharomyces cerevisiae (strain ATCC 204508 / S288c) (Baker's yeast)).